The primary structure comprises 80 residues: Bowman-Birk type proteinase inhibitor DE-4 (80 aa).

The span at 1 to 10 shows a compositional bias: acidic residues; it reads DDDHSDDEPR. The disordered stretch occupies residues 1–29; it reads DDDHSDDEPRESESSKPCCSSCCTRSRPP. Residues 15 to 29 are compositionally biased toward low complexity; it reads SKPCCSSCCTRSRPP. Disulfide bonds link C18-C71, C19-C33, C22-C67, C23-C31, C41-C48, C45-C60, and C50-C58.

The protein belongs to the Bowman-Birk serine protease inhibitor family.

The polypeptide is Bowman-Birk type proteinase inhibitor DE-4 (Philenoptera violacea (Apple-leaf)).